A 4138-amino-acid polypeptide reads, in one-letter code: Fumosorinone synthetase (4138 aa).

The Ketosynthase family 3 (KS3) domain maps to 15-455 (PEPIAIVGSA…GTNAHAIIER (441 aa)). Residues cysteine 189, histidine 328, and histidine 375 each act as for beta-ketoacyl synthase activity in the active site. Residues 590–921 (VFTGQGAQWP…APDAVSFSTA (332 aa)) form a malonyl-CoA:ACP transacylase (MAT) domain region. The tract at residues 990 to 1133 (HELLGRRAVD…GLIDVHLGPR (144 aa)) is N-terminal hotdog fold. The tract at residues 990–1306 (HELLGRRAVD…GFEVRSVGER (317 aa)) is dehydratase (DH) domain. The PKS/mFAS DH domain occupies 990–1309 (HELLGRRAVD…VRSVGERDAA (320 aa)). Histidine 1022 functions as the Proton acceptor; for dehydratase activity in the catalytic mechanism. The C-terminal hotdog fold stretch occupies residues 1157–1309 (LQEIDCEKLY…VRSVGERDAA (153 aa)). Aspartate 1216 (proton donor; for dehydratase activity) is an active-site residue. Residues 1456 to 1650 (RFYAEDKGMQ…FSGADHVAHD (195 aa)) are methyltransferase (MT) domain. The tract at residues 2205-2379 (TYLMVGAAGG…AASIIHVGFV (175 aa)) is ketoreductase (KR) domain. In terms of domain architecture, Carrier 1 spans 2507-2587 (EAAAAVRRAF…QLSTLAAKLA (81 aa)). O-(pantetheine 4'-phosphoryl)serine is present on serine 2547. The disordered stretch occupies residues 2587-2683 (ARQQSPRKEG…TEPKTEDKVS (97 aa)). Residues 2610 to 2621 (TQDKLVDDKEQK) show a composition bias toward basic and acidic residues. Residues 2622 to 2643 (VQVTSSLAKADSLTQEMQASAH) are compositionally biased toward polar residues. The segment covering 2647-2659 (DSATNPTPSSTAS) has biased composition (low complexity). Residues 2664 to 2675 (SNSQSTRSTSTE) are compositionally biased toward polar residues. The interval 2701-3128 (REAPMSAAQA…ASQRVRECAV (428 aa)) is condensation (C) domain. The tract at residues 3162 to 3564 (CQKNSARTAI…DGTLLCFGRI (403 aa)) is adenylation (A) (KR) domain. The Carrier 2 domain occupies 3680–3759 (EKMTIQEGEL…GMTRCVLAQR (80 aa)). O-(pantetheine 4'-phosphoryl)serine is present on serine 3719. Residues 3813-4045 (LTGATGFLGG…LDFGTVDAVV (233 aa)) are reductase (RED) domain.

It in the C-terminal section; belongs to the NRP synthetase family.

In terms of biological role, hybrid PKS-NRPS synthetase; part of the gene cluster that mediates the biosynthesis of fumosorinone, a 2-pyridone alkaloid that acts as an inhibitor of protein tyrosine phosphatase 1B which is implicated asa negative regulator of insulin receptor signaling and a potential drug target for the treatment of type II diabetes and other associated metabolic syndromes. The polyketide-amino acid backbone of fumosorinone is first assembled by the PKS-NRPS hybrid fumoS. The PKS modules condense one acetyl-CoA starter unit with 7 malonyl-CoA units, programmed C-methylations occurring after the first 3 and the sixth extensions, and cycles of full reduction occurring after the first 2 extensions. Because fumoS lacks a designated enoyl reductase (ER) domain, the required activity is provided the enoyl reductase fumoC. Upon formation of the polyketide backbone on the thiotemplate, the polyketide is transferred to the NRPS module and linked to tyrosine to produce the acyltetramic acid intermediate called prefumosorinone A. The cytochrome P450 monooxygenase fumoA then probably catalyzes an unprecedented oxidative ring expansion of prefumosorinone A to form prefumosorinone B which contains the 2-pyridone core of fumosorinone. The cytochrome P450 monooxygenase fumoB might hydroxylate the nitrogen of prefumosorinone B, but not the acyltetramic acid prefumosorinone A, to form fumosorinone. The chain is Fumosorinone synthetase from Cordyceps fumosorosea (strain ARSEF 2679) (Isaria fumosorosea).